The sequence spans 110 residues: MEWGPGSDWSRGEAAGVDRGKAGLGLGGRPPPQPPREERAQQLLDAVEQRQRQLLDTIAACEEMLRQLGRRRPEPAGGGNVSAKPGAPPQPAVSARGGFPKDAGDGAAEP.

2 disordered regions span residues 1 to 42 and 66 to 110; these read MEWG…RAQQ and RQLG…AAEP. A coiled-coil region spans residues 36–68; sequence REERAQQLLDAVEQRQRQLLDTIAACEEMLRQL.

This is an uncharacterized protein from Homo sapiens (Human).